Here is a 49-residue protein sequence, read N- to C-terminus: Large ribosomal subunit protein bL33B (49 aa).

The protein belongs to the bacterial ribosomal protein bL33 family.

The chain is Large ribosomal subunit protein bL33B (rpmG2) from Lactococcus lactis subsp. cremoris (Streptococcus cremoris).